The following is a 123-amino-acid chain: Large ribosomal subunit protein uL14c (123 aa).

Belongs to the universal ribosomal protein uL14 family. As to quaternary structure, part of the 50S ribosomal subunit.

It is found in the plastid. The protein localises to the chloroplast. In terms of biological role, binds to 23S rRNA. The protein is Large ribosomal subunit protein uL14c of Triticum aestivum (Wheat).